A 361-amino-acid polypeptide reads, in one-letter code: Basic helix-loop-helix protein 79 (361 aa).

The disordered stretch occupies residues 66 to 159; the sequence is APEASNGSGS…ASTVTAGQKT (94 aa). Residues 124–138 are compositionally biased toward basic and acidic residues; the sequence is GRPERARPGAKKKAE. Positions 146 to 157 are enriched in polar residues; it reads PATSASTVTAGQ. Positions 166–173 match the Nuclear localization signal motif; that stretch reads ARRGQATD. A basic motif; degenerate region spans residues 170–183; that stretch reads QATDSHSLAERVRR. The region spanning 170–220 is the bHLH domain; that stretch reads QATDSHSLAERVRRERISERMRYLQELVPGCNKVTGKAGMLDEIINYVQSL. The segment at 184 to 220 is helix-loop-helix motif; the sequence is ERISERMRYLQELVPGCNKVTGKAGMLDEIINYVQSL.

The protein belongs to the bHLH protein family. In terms of assembly, homodimer. Interacts with IBH1.

It localises to the nucleus. Functionally, together with BCL1, positive regulator of cell elongation at least partially through increased gibberellic acid (GA) biosynthesis. The polypeptide is Basic helix-loop-helix protein 79 (Oryza sativa subsp. indica (Rice)).